The sequence spans 341 residues: Hypophosphite import ATP-binding protein HtxD (341 aa).

Positions 6–249 constitute an ABC transporter domain; sequence LQLKNVGKSY…RVHALYQVPA (244 aa). 38 to 45 lines the ATP pocket; the sequence is GTSGAGKS. The disordered stretch occupies residues 278 to 341; it reads IHTPHTRAAP…TGRGQDRGPG (64 aa). Composition is skewed to basic and acidic residues over residues 307–320 and 327–341; these read ADRR…DRTT and GGHD…RGPG.

The protein belongs to the ABC transporter superfamily. Phosphonates importer (TC 3.A.1.9.1) family. In terms of assembly, the complex is composed of two ATP-binding proteins (HtxD), two transmembrane proteins (HtxC and HtxE) and a solute-binding protein (HtxB).

It is found in the cell inner membrane. It carries out the reaction phosphinate(out) + ATP + H2O = phosphinate(in) + ADP + phosphate + H(+). Functionally, part of the ABC transporter complex HtxBCDE involved in hypophosphite import. Responsible for energy coupling to the transport system. In Stutzerimonas stutzeri (Pseudomonas stutzeri), this protein is Hypophosphite import ATP-binding protein HtxD (htxD).